The primary structure comprises 267 residues: Orotidine 5'-phosphate decarboxylase (267 aa).

Substrate contacts are provided by residues Asp-37, 59–61 (KTH), 91–100 (DRKFADIGNT), Tyr-217, and Arg-235. The Proton donor role is filled by Lys-93.

It belongs to the OMP decarboxylase family.

The catalysed reaction is orotidine 5'-phosphate + H(+) = UMP + CO2. The protein operates within pyrimidine metabolism; UMP biosynthesis via de novo pathway; UMP from orotate: step 2/2. The protein is Orotidine 5'-phosphate decarboxylase (URA3) of Kluyveromyces marxianus (Yeast).